Here is a 23-residue protein sequence, read N- to C-terminus: Melittin-related peptide AK-23-1 (23 aa).

The residue at position 23 (Lys-23) is a Lysine amide.

As to expression, expressed by the skin glands.

It is found in the secreted. This Rana arvalis (Moor frog) protein is Melittin-related peptide AK-23-1.